The chain runs to 222 residues: Iron-sulfur cluster repair protein YtfE (222 aa).

It belongs to the RIC family. YtfE subfamily. As to quaternary structure, homodimer.

The protein resides in the cytoplasm. Functionally, di-iron-containing protein involved in the repair of iron-sulfur clusters damaged by oxidative and nitrosative stress conditions. The sequence is that of Iron-sulfur cluster repair protein YtfE from Musicola paradisiaca (strain Ech703) (Dickeya paradisiaca).